A 118-amino-acid chain; its full sequence is Holo-[acyl-carrier-protein] synthase (118 aa).

Residues Asp-8 and Glu-57 each coordinate Mg(2+).

Belongs to the P-Pant transferase superfamily. AcpS family. It depends on Mg(2+) as a cofactor.

It is found in the cytoplasm. The enzyme catalyses apo-[ACP] + CoA = holo-[ACP] + adenosine 3',5'-bisphosphate + H(+). Transfers the 4'-phosphopantetheine moiety from coenzyme A to a Ser of acyl-carrier-protein. The chain is Holo-[acyl-carrier-protein] synthase from Acholeplasma laidlawii (strain PG-8A).